Reading from the N-terminus, the 228-residue chain is A-type ATP synthase subunit D (228 aa).

The segment covering 205 to 214 (KKEEEEKAEA) has biased composition (basic and acidic residues). Positions 205-228 (KKEEEEKAEAAAEAAAVEDPEPAD) are disordered.

This sequence belongs to the V-ATPase D subunit family. Has multiple subunits with at least A(3), B(3), C, D, E, F, H, I and proteolipid K(x).

The protein resides in the cell membrane. Functionally, component of the A-type ATP synthase that produces ATP from ADP in the presence of a proton gradient across the membrane. The chain is A-type ATP synthase subunit D from Halorubrum lacusprofundi (strain ATCC 49239 / DSM 5036 / JCM 8891 / ACAM 34).